The sequence spans 666 residues: Endogenous retrovirus group K member 24 Gag polyprotein (666 aa).

G2 is lipidated: N-myristoyl glycine. The tract at residues 165–264 (GKGPELVGPS…APPSRQGSEL (100 aa)) is disordered. A compositionally biased stretch (pro residues) spans 232–247 (GMPPAPQGRAPYPQPP). 2 consecutive CCHC-type zinc fingers follow at residues 544 to 561 (GKCY…NCPV) and 580 to 597 (DLCP…QCRS). The segment at 598-641 (KFDKNGQPLSGNEQRGQPQAPQQTGAFPIQPFVPQGFQGQQPPL) is disordered. Over residues 604–622 (QPLSGNEQRGQPQAPQQTG) the composition is skewed to polar residues. A compositionally biased stretch (low complexity) spans 624–640 (FPIQPFVPQGFQGQQPP).

Belongs to the beta type-B retroviral Gag protein family. HERV class-II K(HML-2) gag subfamily. Myristoylation is essential for retroviral assembly. Alteration of the glycine residue leads to a block in the budding of particles and an accumulation of Gag inside the cell. Post-translationally, specific enzymatic cleavages may yield mature proteins.

The protein localises to the cell membrane. In terms of biological role, the products of the Gag polyproteins of infectious retroviruses perform highly complex orchestrated tasks during the assembly, budding, maturation, and infection stages of the viral replication cycle. During viral assembly, the proteins form membrane associations and self-associations that ultimately result in budding of an immature virion from the infected cell. Gag precursors also function during viral assembly to selectively bind and package two plus strands of genomic RNA. Endogenous Gag proteins may have kept, lost or modified their original function during evolution. The protein is Endogenous retrovirus group K member 24 Gag polyprotein (ERVK-24) of Homo sapiens (Human).